The chain runs to 147 residues: Large ribosomal subunit protein bL9 (147 aa).

Belongs to the bacterial ribosomal protein bL9 family.

Its function is as follows. Binds to the 23S rRNA. This Geotalea uraniireducens (strain Rf4) (Geobacter uraniireducens) protein is Large ribosomal subunit protein bL9.